A 246-amino-acid chain; its full sequence is Mast cell protease 2 (246 aa).

A signal peptide spans methionine 1 to alanine 19. Positions glycine 20 to glutamate 21 are cleaved as a propeptide — activation peptide. In terms of domain architecture, Peptidase S1 spans isoleucine 22–lysine 244. A disulfide bridge connects residues cysteine 51 and cysteine 67. Active-site charge relay system residues include histidine 66 and aspartate 109. Asparagine 120 carries an N-linked (GlcNAc...) asparagine glycan. Disulfide bonds link cysteine 143–cysteine 208 and cysteine 174–cysteine 187. Catalysis depends on serine 202, which acts as the Charge relay system.

This sequence belongs to the peptidase S1 family. Granzyme subfamily.

It localises to the secreted. The protein resides in the cytoplasmic granule. Its function is as follows. Putative mast cell chymase. The chain is Mast cell protease 2 from Ovis aries (Sheep).